The sequence spans 405 residues: uncharacterized protein (405 aa).

A signal peptide spans 1–20; that stretch reads MKAKLALSIIGLVLASLVAG. Cys21 carries the N-acetylcysteine modification. A lipid anchor (S-archaeol cysteine) is attached at Cys21.

Belongs to the BMP lipoprotein family.

The protein resides in the cell membrane. This is an uncharacterized protein from Pyrococcus horikoshii (strain ATCC 700860 / DSM 12428 / JCM 9974 / NBRC 100139 / OT-3).